The chain runs to 198 residues: Dynein light chain Tctex-type protein 2 (198 aa).

A disordered region spans residues M1–S34. Positions S11–P24 are enriched in polar residues.

Belongs to the dynein light chain Tctex-type family. As to quaternary structure, interacts with CCDC159. Interacts with CSNK2B. Expressed predominantly in testis. Also expressed in brain, lung and trachea.

The protein localises to the cytoplasm. It is found in the cytoskeleton. It localises to the cytoplasmic granule. The protein resides in the membrane. Its function is as follows. May be an accessory component of axonemal dynein and cytoplasmic dynein 1. Candidate for involvement in male sterility. In Homo sapiens (Human), this protein is Dynein light chain Tctex-type protein 2.